A 189-amino-acid chain; its full sequence is Glycerol-3-phosphate acyltransferase (189 aa).

5 helical membrane passes run 1 to 21 (MFWL…AIVL), 50 to 70 (KLAI…VLLA), 77 to 97 (LHAQ…PLYF), 111 to 131 (MLMG…LLTF), and 151 to 171 (LLAW…AMIV).

Belongs to the PlsY family. Probably interacts with PlsX.

Its subcellular location is the cell inner membrane. The catalysed reaction is an acyl phosphate + sn-glycerol 3-phosphate = a 1-acyl-sn-glycero-3-phosphate + phosphate. The protein operates within lipid metabolism; phospholipid metabolism. Functionally, catalyzes the transfer of an acyl group from acyl-phosphate (acyl-PO(4)) to glycerol-3-phosphate (G3P) to form lysophosphatidic acid (LPA). This enzyme utilizes acyl-phosphate as fatty acyl donor, but not acyl-CoA or acyl-ACP. The sequence is that of Glycerol-3-phosphate acyltransferase from Pseudomonas putida (strain GB-1).